We begin with the raw amino-acid sequence, 565 residues long: MKSPTPSRPQKMALIPACIFLCFAALSVQAEETSVTPQPPDILLGPLFNDVQNAKLFPDQKTFADAVPNSDPLMILADYRMQQNQSGFDLRHFVNVNFTLPKEGEKYVPPEGQSLREHIDGLWPVLTRSTENTEKWDSLLPLPEPYVVPGGRFREVYYWDSYFTMLGLAESGHWDKVADMVANFAHEIDTYGHIPNGNRSYYLSRSQPPFFALMVELLAQHEGDAALKQYLPQMQKEYAYWMDGVENLQAGQQEKRVVKLQDGTLLNRYWDDRDTPRPESWVEDIATAKSNPNRPATEIYRDLRSAAASGWDFSSRWMDNPQQLNTLRTTSIVPVDLNSLMFKMEKILARASKAAGDNAMANQYETLANARQKGIEKYLWNDQQGWYADYDLKSHKVRNQLTAAALFPLYVNAAAKDRASKMATATKTHLLQPGGLNTTSVKSGQQWDAPNGWAPLQWVATEGLQNYGQKEVAMDISWHFLTNVQHTYDREKKLVEKYDVSATGTGGGGGEYPLQDGFGWTNGVTLKMLDLICPKEQPCDNVPATRPLSESTTQPLKQKEAEPTP.

An N-terminal signal peptide occupies residues 1–30 (MKSPTPSRPQKMALIPACIFLCFAALSVQA). Residues arginine 152, 159–160 (WD), asparagine 196, 205–207 (RSQ), 277–279 (RPE), and glycine 310 each bind substrate. Active-site proton donor/acceptor residues include aspartate 312 and glutamate 496. A substrate-binding site is contributed by glutamate 511. A disordered region spans residues 539-565 (CDNVPATRPLSESTTQPLKQKEAEPTP).

The protein belongs to the glycosyl hydrolase 37 family. In terms of assembly, monomer.

The protein localises to the periplasm. It catalyses the reaction alpha,alpha-trehalose + H2O = alpha-D-glucose + beta-D-glucose. Provides the cells with the ability to utilize trehalose at high osmolarity by splitting it into glucose molecules that can subsequently be taken up by the phosphotransferase-mediated uptake system. The polypeptide is Periplasmic trehalase (Escherichia coli O7:K1 (strain IAI39 / ExPEC)).